Reading from the N-terminus, the 465-residue chain is Kynureninase (465 aa).

M1 is subject to N-acetylmethionine. Pyridoxal 5'-phosphate-binding positions include L137, T138, 165-168 (FPSD), S221, D250, H253, and Y275. N6-(pyridoxal phosphate)lysine is present on K276. Residues W305 and N333 each contribute to the pyridoxal 5'-phosphate site.

It belongs to the kynureninase family. Homodimer. Requires pyridoxal 5'-phosphate as cofactor. Expressed in all tissues tested (heart, brain placenta, lung, liver, skeletal muscle, kidney and pancreas). Highest levels found in placenta, liver and lung. Expressed in all brain regions.

The protein resides in the cytoplasm. Its subcellular location is the cytosol. The enzyme catalyses L-kynurenine + H2O = anthranilate + L-alanine + H(+). It catalyses the reaction 3-hydroxy-L-kynurenine + H2O = 3-hydroxyanthranilate + L-alanine + H(+). It participates in amino-acid degradation; L-kynurenine degradation; L-alanine and anthranilate from L-kynurenine: step 1/1. Its pathway is cofactor biosynthesis; NAD(+) biosynthesis; quinolinate from L-kynurenine: step 2/3. With respect to regulation, inhibited by o-methoxybenzoylalanine (OMBA). Its function is as follows. Catalyzes the cleavage of L-kynurenine (L-Kyn) and L-3-hydroxykynurenine (L-3OHKyn) into anthranilic acid (AA) and 3-hydroxyanthranilic acid (3-OHAA), respectively. Has a preference for the L-3-hydroxy form. Also has cysteine-conjugate-beta-lyase activity. This Homo sapiens (Human) protein is Kynureninase.